Reading from the N-terminus, the 158-residue chain is C-type lectin lectoxin-Enh7 (158 aa).

Positions 1–23 (MGQFTVVSLGLLAVFLSLSGAKG) are cleaved as a signal peptide. Cystine bridges form between cysteine 26/cysteine 37, cysteine 54/cysteine 154, and cysteine 129/cysteine 146. Positions 33 to 155 (RNGVCNKLFP…CASLHPFICQ (123 aa)) constitute a C-type lectin domain. Residues 119–121 (EPN) carry the Mannose-binding motif. Glutamate 127, asparagine 142, and aspartate 143 together coordinate Ca(2+).

This sequence belongs to the true venom lectin family. In terms of tissue distribution, expressed by the venom gland.

It localises to the secreted. Functionally, mannose-binding lectin which recognizes specific carbohydrate structures and agglutinates a variety of animal cells by binding to cell-surface glycoproteins and glycolipids. May be a calcium-dependent lectin. This Pseudoferania polylepis (Macleay's water snake) protein is C-type lectin lectoxin-Enh7.